We begin with the raw amino-acid sequence, 194 residues long: Adenylate kinase (194 aa).

Residue 10 to 15 (GAGKGT) participates in ATP binding. Positions 30–59 (STGDMLRAAVKAETEIGKKAKAVMDAGELV) are NMP. AMP contacts are provided by residues T31, R36, 57–59 (ELV), 85–88 (GYPR), and Q92. Residues 126 to 142 (KRAEDAQAAGQPVRRDD) are LID. R127 provides a ligand contact to ATP. R139 and R150 together coordinate AMP. Residue A178 coordinates ATP.

The protein belongs to the adenylate kinase family. In terms of assembly, monomer.

It localises to the cytoplasm. The enzyme catalyses AMP + ATP = 2 ADP. The protein operates within purine metabolism; AMP biosynthesis via salvage pathway; AMP from ADP: step 1/1. Functionally, catalyzes the reversible transfer of the terminal phosphate group between ATP and AMP. Plays an important role in cellular energy homeostasis and in adenine nucleotide metabolism. The chain is Adenylate kinase from Chelativorans sp. (strain BNC1).